A 1174-amino-acid chain; its full sequence is PR domain zinc finger protein 15 (1174 aa).

Positions 75 to 185 (SNLEIRRLDD…AGTELRVWYA (111 aa)) constitute an SET domain. Residues 252 to 307 (LPAGGQQHEAASEKEPDAPRMEPPTAAESKSIQSVMVTKEPKKKPRRGRKPKASKV) are disordered. A compositionally biased stretch (basic and acidic residues) spans 261–271 (AASEKEPDAPR). The span at 292–304 (PKKKPRRGRKPKA) shows a compositional bias: basic residues. C2H2-type zinc fingers lie at residues 402–424 (HQCG…VRSH) and 434–457 (FKCE…SYKH). A C2H2-type 3; degenerate zinc finger spans residues 468-486 (YRCGSCGKTFRMESALEFH). 2 C2H2-type zinc fingers span residues 495 to 517 (FQCE…KKKH) and 522 to 544 (FACE…QRRH). A Glycyl lysine isopeptide (Lys-Gly) (interchain with G-Cter in SUMO2) cross-link involves residue Lys552. 2 consecutive C2H2-type zinc fingers follow at residues 571–593 (SGCP…LLTH) and 598–620 (YTCE…IHVH). The interval 639–658 (IGISSEENDDNSDESADSEP) is disordered. The span at 644–655 (EENDDNSDESAD) shows a compositional bias: acidic residues. C2H2-type zinc fingers lie at residues 661–684 (YSCK…MEVH), 689–711 (HGCS…MVIH), 725–747 (HPCE…KLIH), 753–775 (HACE…MRVH), 781–803 (YLCA…MKLH), 809–831 (YECK…YKRH), 837–859 (FMCE…KLIH), and 865–888 (WTCS…QLTH). 2 disordered regions span residues 957-1007 (AEGK…GDET) and 1147-1174 (LQPP…MYSY). Residues 962-973 (GKAAKRSHKRKQ) are compositionally biased toward basic residues. The segment covering 1154-1174 (AAPQQAVQPQVQNEQQQMYSY) has biased composition (low complexity).

As to expression, expressed in embryonic stem cells (ESCs) (at protein level).

It localises to the nucleus. Sequence-specific DNA-binding transcriptional regulator. Plays a role as a molecular node in a transcriptional network regulating embryonic development and cell fate decision. Stimulates the expression of upstream key transcriptional activators and repressors of the Wnt/beta-catenin and MAPK/ERK pathways, respectively, that are essential for naive pluripotency and self-renewal maintenance of embryonic stem cells (ESCs). Specifically promotes SPRY1 and RSPO1 transcription activation through recognition and direct binding of a specific DNA sequence in their promoter regions. Also plays a role in induced pluripotent stem cells (iPSCs) reprogramming. Involved in early embryo development. The sequence is that of PR domain zinc finger protein 15 from Mus musculus (Mouse).